The following is a 122-amino-acid chain: MIQVQTRLKVADNSGGIKAMCIKVLGGSKRRYANIGDVIKVSIKEVVPRGKVKKGDVYDAVVVRTAHGVRRSDGSRIRFDSNAIVLLNTKREPIGTRIFGPVTRELRSAQFMKIVSLAPEVL.

Belongs to the universal ribosomal protein uL14 family. Part of the 50S ribosomal subunit. Forms a cluster with proteins L3 and L19. In the 70S ribosome, L14 and L19 interact and together make contacts with the 16S rRNA in bridges B5 and B8.

Functionally, binds to 23S rRNA. Forms part of two intersubunit bridges in the 70S ribosome. This Vesicomyosocius okutanii subsp. Calyptogena okutanii (strain HA) protein is Large ribosomal subunit protein uL14.